An 82-amino-acid polypeptide reads, in one-letter code: UPF0729 protein C18orf32 homolog (82 aa).

Residues 1–37 (MVCIPCIVIPVLLWVYKKFLEPIVYPFISPIINRIWP) are necessary for its localzation to the endoplasmic reticulum and lipid droplets. Residues 46 to 82 (TSAKKEESNGTCKASGTSITNGSVSRGEEAVPDKKTD) form a disordered region. The span at 54-69 (NGTCKASGTSITNGSV) shows a compositional bias: polar residues. Positions 71-82 (RGEEAVPDKKTD) are enriched in basic and acidic residues.

It belongs to the UPF0729 family.

It localises to the endoplasmic reticulum. It is found in the lipid droplet. The protein is UPF0729 protein C18orf32 homolog of Xenopus tropicalis (Western clawed frog).